The chain runs to 543 residues: Protein lin-9 homolog (543 aa).

Residues 21–82 (REGSLSNTLN…SRSPRRSQRV (62 aa)) are disordered. Polar residues predominate over residues 24 to 55 (SLSNTLNEKNNLPKSQTTRGRSSYVSMETPTR). The stretch at 355 to 451 (IKKEHIKHLK…VLRQNNTLAS (97 aa)) forms a coiled coil.

Belongs to the lin-9 family. Component of the DREAM complex.

Its subcellular location is the nucleus. This chain is Protein lin-9 homolog (lin9), found in Danio rerio (Zebrafish).